The primary structure comprises 503 residues: Arabinose import ATP-binding protein AraG (503 aa).

ABC transporter domains lie at 5–240 (LRFD…MVGR) and 253–497 (LGDV…LPQG). 37 to 44 (GENGAGKS) is a binding site for ATP.

Belongs to the ABC transporter superfamily. Arabinose importer (TC 3.A.1.2.2) family. As to quaternary structure, the complex is composed of two ATP-binding proteins (AraG), two transmembrane proteins (AraH) and a solute-binding protein (AraF).

It is found in the cell inner membrane. The enzyme catalyses L-arabinose(out) + ATP + H2O = L-arabinose(in) + ADP + phosphate + H(+). In terms of biological role, part of the ABC transporter complex AraFGH involved in arabinose import. Responsible for energy coupling to the transport system. The sequence is that of Arabinose import ATP-binding protein AraG from Burkholderia pseudomallei (strain K96243).